The chain runs to 30 residues: Alpha-defensin PhD-4 (30 aa).

3 cysteine pairs are disulfide-bonded: C2–C30, C4–C19, and C9–C29.

The protein localises to the secreted. Its function is as follows. In low salt conditions, has antibacterial activity against the Gram-negative bacterium E.coli ML35p (MIC=2.4 uM), the Gram-positive bacteria L.monocytogenes EGD (MIC=2.2 uM) and methicillin-resistant S.aureus ATCC 33591 (MIC=3.5 uM), and the fungus C.albicans 820 (MIC=3.9 uM). At high physiological salt concentrations the antimicrobial activity decreases significantly: E.coli ML35p (MIC=7.1 uM), L.monocytogenes EGD (MIC=1.8 uM), S.aureus ATCC 33591 (MIC=&gt;50 uM), and C.albicans 820 (MIC=&gt;50 uM). This chain is Alpha-defensin PhD-4, found in Papio hamadryas (Hamadryas baboon).